The following is a 343-amino-acid chain: Glyceraldehyde-3-phosphate dehydrogenase (343 aa).

NAD(+)-binding positions include 13-14 (TI) and G111. D-glyceraldehyde 3-phosphate is bound at residue 140-142 (SCN). C141 serves as the catalytic Nucleophile. R169 contributes to the NAD(+) binding site. 195–196 (HA) is a D-glyceraldehyde 3-phosphate binding site. Q303 lines the NAD(+) pocket.

This sequence belongs to the glyceraldehyde-3-phosphate dehydrogenase family. Homotetramer.

The protein resides in the cytoplasm. It carries out the reaction D-glyceraldehyde 3-phosphate + phosphate + NADP(+) = (2R)-3-phospho-glyceroyl phosphate + NADPH + H(+). The catalysed reaction is D-glyceraldehyde 3-phosphate + phosphate + NAD(+) = (2R)-3-phospho-glyceroyl phosphate + NADH + H(+). It functions in the pathway carbohydrate degradation; glycolysis; pyruvate from D-glyceraldehyde 3-phosphate: step 1/5. The sequence is that of Glyceraldehyde-3-phosphate dehydrogenase from Sulfurisphaera tokodaii (strain DSM 16993 / JCM 10545 / NBRC 100140 / 7) (Sulfolobus tokodaii).